Here is a 193-residue protein sequence, read N- to C-terminus: Cysteine and glycine-rich protein 1 (193 aa).

Residues 10 to 61 (CGVCQKTVYFAEEVQCEGNSFHKSCFLCMVCKKNLDSTTVAVHGEEIYCKSC) form the LIM zinc-binding 1 domain. Positions 64-69 (KKYGPK) match the Nuclear localization signal motif. Ser-81 carries the post-translational modification Phosphoserine. N6-acetyllysine is present on Lys-84. Lys-91 is covalently cross-linked (Glycyl lysine isopeptide (Lys-Gly) (interchain with G-Cter in SUMO2)). Residues Lys-112, Lys-131, Lys-137, and Lys-161 each carry the N6-acetyllysine modification. The 52-residue stretch at 119 to 170 (CPRCSQAVYAAEKVIGAGKSWHKSCFRCAKCGKGLESTTLADKDGEIYCKGC) folds into the LIM zinc-binding 2 domain. Ser-192 is modified (phosphoserine).

Interacts with ASCC1; ASCC2 and TRIP4.

The protein localises to the nucleus. Could play a role in neuronal development. The sequence is that of Cysteine and glycine-rich protein 1 (Csrp1) from Mus musculus (Mouse).